The chain runs to 286 residues: 4-hydroxybenzoate octaprenyltransferase (286 aa).

Transmembrane regions (helical) follow at residues 20 to 40 (IGTL…AGGM), 43 to 63 (LKVL…GCII), 96 to 116 (LFVV…PLVV), 142 to 162 (FLGV…TGTV), 167 to 187 (WWLF…YAMV), 210 to 230 (QVIA…GWAA), and 234 to 254 (LVYA…QKLI).

This sequence belongs to the UbiA prenyltransferase family. Requires Mg(2+) as cofactor.

It localises to the cell inner membrane. It carries out the reaction all-trans-octaprenyl diphosphate + 4-hydroxybenzoate = 4-hydroxy-3-(all-trans-octaprenyl)benzoate + diphosphate. Its pathway is cofactor biosynthesis; ubiquinone biosynthesis. Catalyzes the prenylation of para-hydroxybenzoate (PHB) with an all-trans polyprenyl group. Mediates the second step in the final reaction sequence of ubiquinone-8 (UQ-8) biosynthesis, which is the condensation of the polyisoprenoid side chain with PHB, generating the first membrane-bound Q intermediate 3-octaprenyl-4-hydroxybenzoate. This is 4-hydroxybenzoate octaprenyltransferase from Shewanella woodyi (strain ATCC 51908 / MS32).